Consider the following 476-residue polypeptide: Bifunctional protein HldE (476 aa).

Positions 1–319 (MKISLPAFEK…EALSLSHGES (319 aa)) are ribokinase. 195–198 (NMSE) contacts ATP. Residue Asp-264 is part of the active site. The interval 345 to 476 (MTNGCFDILH…AIIQNIMANQ (132 aa)) is cytidylyltransferase.

The protein in the N-terminal section; belongs to the carbohydrate kinase PfkB family. This sequence in the C-terminal section; belongs to the cytidylyltransferase family. In terms of assembly, homodimer.

The catalysed reaction is D-glycero-beta-D-manno-heptose 7-phosphate + ATP = D-glycero-beta-D-manno-heptose 1,7-bisphosphate + ADP + H(+). It carries out the reaction D-glycero-beta-D-manno-heptose 1-phosphate + ATP + H(+) = ADP-D-glycero-beta-D-manno-heptose + diphosphate. Its pathway is nucleotide-sugar biosynthesis; ADP-L-glycero-beta-D-manno-heptose biosynthesis; ADP-L-glycero-beta-D-manno-heptose from D-glycero-beta-D-manno-heptose 7-phosphate: step 1/4. The protein operates within nucleotide-sugar biosynthesis; ADP-L-glycero-beta-D-manno-heptose biosynthesis; ADP-L-glycero-beta-D-manno-heptose from D-glycero-beta-D-manno-heptose 7-phosphate: step 3/4. In terms of biological role, catalyzes the phosphorylation of D-glycero-D-manno-heptose 7-phosphate at the C-1 position to selectively form D-glycero-beta-D-manno-heptose-1,7-bisphosphate. Catalyzes the ADP transfer from ATP to D-glycero-beta-D-manno-heptose 1-phosphate, yielding ADP-D-glycero-beta-D-manno-heptose. In Shewanella pealeana (strain ATCC 700345 / ANG-SQ1), this protein is Bifunctional protein HldE.